Consider the following 111-residue polypeptide: uncharacterized protein (111 aa).

The HIT domain occupies 8–111; it reads LFLKIIKREE…HVHIIPYYKK (104 aa). A Histidine triad motif motif is present at residues 100–104; that stretch reads HTHVH.

This is an uncharacterized protein from Mesomycoplasma hyorhinis (Mycoplasma hyorhinis).